The chain runs to 1901 residues: A-kinase anchor protein 11 (1901 aa).

Phosphoserine is present on residues S18, S422, S433, S444, and S448. Residues 407–443 form a disordered region; the sequence is ALPANVRKPTPRKPESPYGNLCDAPDSPRPVKASRED. Disordered stretches follow at residues 843–864 and 971–993; these read NPGNQNDFKPTNDDIEMQSSSK and LPVSGEESQLTPEKSPKFPDSQN. 2 positions are modified to phosphothreonine: T981 and T1100. The interval 1131–1153 is disordered; that stretch reads EFAPATPPSTPHNSSVGSLSENE. The segment covering 1141 to 1153 has biased composition (polar residues); that stretch reads PHNSSVGSLSENE. Phosphoserine occurs at positions 1171, 1176, 1177, 1242, and 1337. Residue T1485 is modified to Phosphothreonine. Phosphoserine is present on S1580. The segment at 1650–1663 is PKA-RII subunit binding domain; sequence LAEKIVAEAIEKAE. The disordered stretch occupies residues 1708–1805; the sequence is KEIEDFQSTE…HEDEVEGLGQ (98 aa). The span at 1713–1740 shows a compositional bias: polar residues; the sequence is FQSTESVSSQQMNLSIGDDSTGSWSNLS. The span at 1747–1756 shows a compositional bias: basic and acidic residues; the sequence is DESSSFHHLS. Low complexity predominate over residues 1757–1772; that stretch reads ESNGNSSSWSSLGLEG. The segment covering 1787–1801 has biased composition (acidic residues); the sequence is DGPDDKDEEHEDEVE.

It belongs to the AKAP110 family. As to expression, expressed in heart, brain, lung, liver, kidney, testis and ovary. Weakly expressed in skeletal muscle, pancreas and spleen.

It is found in the cytoplasm. The protein resides in the cytoskeleton. It localises to the microtubule organizing center. The protein localises to the centrosome. Functionally, binds to type II regulatory subunits of protein kinase A and anchors/targets them. In Homo sapiens (Human), this protein is A-kinase anchor protein 11 (AKAP11).